The chain runs to 806 residues: Transitional endoplasmic reticulum ATPase (806 aa).

A2 is subject to N-acetylalanine. S3 and S7 each carry phosphoserine. K8 is covalently cross-linked (Glycyl lysine isopeptide (Lys-Gly) (interchain with G-Cter in SUMO2)). Phosphoserine is present on S13. K18 participates in a covalent cross-link: Glycyl lysine isopeptide (Lys-Gly) (interchain with G-Cter in SUMO2). The residue at position 37 (S37) is a Phosphoserine. Position 247 to 253 (247 to 253) interacts with ATP; it reads PGTGKTL. K315 is subject to N6,N6,N6-trimethyllysine; by VCPKMT. ATP-binding residues include N348 and H384. T436 carries the post-translational modification Phosphothreonine. S462 is modified (phosphoserine). K502 and K505 each carry N6-acetyllysine. ATP is bound at residue 521-526; the sequence is GCGKTL. K668 bears the N6-acetyllysine; alternate mark. K668 carries the N6-succinyllysine; alternate modification. Position 702 is a phosphoserine (S702). Residues 708–727 form a disordered region; sequence RRERERQTNPSAMEVEEDDP. K754 carries the post-translational modification N6-acetyllysine. The segment at 768–806 is disordered; sequence FGSFRFPSGNQGGAGPSQGSGGGTGGSVYTEDNDDDLYG. 3 positions are modified to phosphoserine: S770, S775, and S787. Gly residues predominate over residues 777 to 793; sequence NQGGAGPSQGSGGGTGG. The segment at 797-806 is interaction with UBXN6; sequence TEDNDDDLYG. Residue Y805 is modified to Phosphotyrosine.

The protein belongs to the AAA ATPase family. In terms of assembly, homohexamer. Forms a ring-shaped particle of 12.5 nm diameter, that displays 6-fold radial symmetry. Part of a ternary complex containing STX5A, NSFL1C and VCP. NSFL1C forms a homotrimer that binds to one end of a VCP homohexamer. The complex binds to membranes enriched in phosphatidylethanolamine-containing lipids and promotes Golgi membrane fusion. Binds to a heterodimer of NPLOC4 and UFD1, binding to this heterodimer inhibits Golgi-membrane fusion. Interaction with VCIP135 leads to dissociation of the complex via ATP hydrolysis by VCP. Part of a ternary complex containing NPLOC4, UFD1 and VCP. Interacts with NSFL1C-like protein p37; the complex has membrane fusion activity and is required for Golgi and endoplasmic reticulum biogenesis. Interacts with SELENOS and SYVN1, as well as with DERL1 (via SHP-box motif), DERL2 and DERL3; which probably transfer misfolded proteins from the ER to VCP. Interacts with SVIP and DERL1. Component of a complex required to couple retrotranslocation, ubiquitination and deglycosylation composed of NGLY1, SAKS1, AMFR, VCP and RAD23B. Part of a complex composed of STUB1/CHIP, VCP/p97, CHRNA3, and UBXN2A that modulates the ubiquitination and endoplasmic reticulum-associated degradation (ERAD) of CHRNA3. Within the complex UBXN2A acts as a scaffold protein required for the interaction of CHRNA3 with VCP/p97, this interaction also inhibits CHRNA3 ubiquitination by STUB1/CHIP and subsequently ERAD. Interacts with UBXN2A (via UBX domain); the interaction is required for the interaction of CHRNA3 in the STUB1-VCP-UBXN2A complex. Directly interacts with UBXN4 and RNF19A. Interacts with CASR. Interacts with UBE4B and YOD1. Interacts with clathrin. Interacts with RNF103. Interacts with TRIM13 and TRIM21. Component of a VCP/p97-AMFR/gp78 complex that participates in the final step of the endoplasmic reticulum-associated degradation (ERAD) of HMGCR. Interacts directly with AMFR/gp78 (via its VIM). Interacts with RHBDD1 (via C-terminal domain). Interacts with SPRTN; leading to recruitment to stalled replication forks. Interacts with WASHC5. Interacts with UBOX5. Interacts (via N-terminus) with UBXN7, UBXN8, and probably several other UBX domain-containing proteins (via UBX domains); the interactions are mutually exclusive with VIM-dependent interactions such as those with AMFR and SELENOS. Forms a complex with UBQLN1 and UBXN4. Interacts (via the PIM motif) with RNF31 (via the PUB domain). Interacts with RIGI and RNF125; interaction takes place when RIGI is ubiquitinated via 'Lys-63'-linked ubiquitin on its CARD domains, leading to recruit RNF125 and promote ubiquitination and degradation of RIGI. Interacts with BAG6. Interacts with UBXN10. Interacts with UBXN6; the interaction with UBXN6 is direct and competitive with UFD1. Forms a ternary complex with CAV1 and UBXN6. Interacts with PLAA, UBXN6 and YOD1; may form a complex involved in macroautophagy. Interacts with ANKZF1. Interacts with ubiquitin-binding protein FAF1. Interacts with ZFAND2B (via VIM motif); the interaction is direct. Interacts with ZFAND1 (via its ubiquitin-like region); this interaction occurs in an arsenite-dependent manner. Interacts with CCDC47. Interacts with LMBR1L and UBAC2. Interacts with ATXN3. Interacts with TEX264; bridging VCP to covalent DNA-protein cross-links (DPCs). Mg(2+) serves as cofactor. ISGylated. In terms of processing, methylation at Lys-315 catalyzed by VCPKMT is increased in the presence of ASPSCR1. Lys-315 methylation may decrease ATPase activity. Post-translationally, phosphorylated by tyrosine kinases in response to T-cell antigen receptor activation. Phosphorylated in mitotic cells.

It localises to the cytoplasm. Its subcellular location is the cytosol. The protein localises to the endoplasmic reticulum. It is found in the nucleus. The protein resides in the stress granule. It carries out the reaction ATP + H2O = ADP + phosphate + H(+). Functionally, necessary for the fragmentation of Golgi stacks during mitosis and for their reassembly after mitosis. Involved in the formation of the transitional endoplasmic reticulum (tER). The transfer of membranes from the endoplasmic reticulum to the Golgi apparatus occurs via 50-70 nm transition vesicles which derive from part-rough, part-smooth transitional elements of the endoplasmic reticulum (tER). Vesicle budding from the tER is an ATP-dependent process. The ternary complex containing UFD1, VCP and NPLOC4 binds ubiquitinated proteins and is necessary for the export of misfolded proteins from the ER to the cytoplasm, where they are degraded by the proteasome. The NPLOC4-UFD1-VCP complex regulates spindle disassembly at the end of mitosis and is necessary for the formation of a closed nuclear envelope. Regulates E3 ubiquitin-protein ligase activity of RNF19A. Component of the VCP/p97-AMFR/gp78 complex that participates in the final step of the sterol-mediated ubiquitination and endoplasmic reticulum-associated degradation (ERAD) of HMGCR. Mediates the endoplasmic reticulum-associated degradation of CHRNA3 in cortical neurons as part of the STUB1-VCP-UBXN2A complex. Involved in endoplasmic reticulum stress-induced pre-emptive quality control, a mechanism that selectively attenuates the translocation of newly synthesized proteins into the endoplasmic reticulum and reroutes them to the cytosol for proteasomal degradation. Involved in clearance process by mediating G3BP1 extraction from stress granules. Also involved in DNA damage response: recruited to double-strand breaks (DSBs) sites in a RNF8- and RNF168-dependent manner and promotes the recruitment of TP53BP1 at DNA damage sites. Recruited to stalled replication forks by SPRTN: may act by mediating extraction of DNA polymerase eta (POLH) to prevent excessive translesion DNA synthesis and limit the incidence of mutations induced by DNA damage. Together with SPRTN metalloprotease, involved in the repair of covalent DNA-protein cross-links (DPCs) during DNA synthesis. Involved in interstrand cross-link repair in response to replication stress by mediating unloading of the ubiquitinated CMG helicase complex. Mediates extraction of PARP1 trapped to chromatin: recognizes and binds ubiquitinated PARP1 and promotes its removal. Required for cytoplasmic retrotranslocation of stressed/damaged mitochondrial outer-membrane proteins and their subsequent proteasomal degradation. Essential for the maturation of ubiquitin-containing autophagosomes and the clearance of ubiquitinated protein by autophagy. Acts as a negative regulator of type I interferon production by interacting with RIGI: interaction takes place when RIGI is ubiquitinated via 'Lys-63'-linked ubiquitin on its CARD domains, leading to recruit RNF125 and promote ubiquitination and degradation of RIGI. May play a role in the ubiquitin-dependent sorting of membrane proteins to lysosomes where they undergo degradation. May more particularly play a role in caveolins sorting in cells. By controlling the steady-state expression of the IGF1R receptor, indirectly regulates the insulin-like growth factor receptor signaling pathway. This Sus scrofa (Pig) protein is Transitional endoplasmic reticulum ATPase (VCP).